The primary structure comprises 286 residues: Cytotoxin (286 aa).

A propeptide spanning residues 267 to 286 is cleaved from the precursor; sequence TFYNYASLVPDLETRVRSAE.

Belongs to the aerolysin family.

The protein resides in the secreted. Functionally, cytotoxin is thought to form hydrophilic pores in cell membranes. This chain is Cytotoxin (ctx), found in Pseudomonas aeruginosa.